The following is a 431-amino-acid chain: Enolase (431 aa).

Gln168 lines the (2R)-2-phosphoglycerate pocket. Glu210 serves as the catalytic Proton donor. Mg(2+) contacts are provided by Asp247, Glu291, and Asp318. (2R)-2-phosphoglycerate-binding residues include Lys343, Arg372, Ser373, and Lys394. Lys343 functions as the Proton acceptor in the catalytic mechanism.

The protein belongs to the enolase family. As to quaternary structure, component of the RNA degradosome, a multiprotein complex involved in RNA processing and mRNA degradation. Mg(2+) is required as a cofactor.

The protein localises to the cytoplasm. It is found in the secreted. The protein resides in the cell surface. The enzyme catalyses (2R)-2-phosphoglycerate = phosphoenolpyruvate + H2O. It participates in carbohydrate degradation; glycolysis; pyruvate from D-glyceraldehyde 3-phosphate: step 4/5. Catalyzes the reversible conversion of 2-phosphoglycerate (2-PG) into phosphoenolpyruvate (PEP). It is essential for the degradation of carbohydrates via glycolysis. The polypeptide is Enolase (Acinetobacter baumannii (strain SDF)).